Consider the following 380-residue polypeptide: Acid phosphatase-like protein XcAP-3 (380 aa).

The signal sequence occupies residues 1–19 (MKATILLFLVLAVVQLSTA). 3 disulfide bridges follow: cysteine 147/cysteine 374, cysteine 167/cysteine 221, and cysteine 347/cysteine 351.

It belongs to the histidine acid phosphatase family.

The protein localises to the secreted. Functionally, probably modulates blood feeding of fleas on vertebrate species by binding and sequestering different mediators involved in the host response. Binds histamine. Binds leukotriene C4. Does not bind serotonin, adrenaline, noradrenaline, leukotriene B4, leukotriene D4, leukotriene E4, ADP, and stable analogs of thromboxane A2: U-46619 and cTXA2. This is Acid phosphatase-like protein XcAP-3 from Xenopsylla cheopis (Oriental rat flea).